Reading from the N-terminus, the 248-residue chain is 3-deoxy-manno-octulosonate cytidylyltransferase (248 aa).

It belongs to the KdsB family.

It localises to the cytoplasm. It catalyses the reaction 3-deoxy-alpha-D-manno-oct-2-ulosonate + CTP = CMP-3-deoxy-beta-D-manno-octulosonate + diphosphate. It participates in nucleotide-sugar biosynthesis; CMP-3-deoxy-D-manno-octulosonate biosynthesis; CMP-3-deoxy-D-manno-octulosonate from 3-deoxy-D-manno-octulosonate and CTP: step 1/1. It functions in the pathway bacterial outer membrane biogenesis; lipopolysaccharide biosynthesis. Its function is as follows. Activates KDO (a required 8-carbon sugar) for incorporation into bacterial lipopolysaccharide in Gram-negative bacteria. The sequence is that of 3-deoxy-manno-octulosonate cytidylyltransferase from Erwinia tasmaniensis (strain DSM 17950 / CFBP 7177 / CIP 109463 / NCPPB 4357 / Et1/99).